The sequence spans 693 residues: MAHTFLLEIGLEEIPAHVVTPSVNQLVQKTTKFLKEQRIDFDEVIPYSTPRRLTVKVTGLADKQADIEEEAKGPSKKIALDDEGNWSKAAQGFVRGQGVTVDDIFFKELKGTEYVYVKKFIPGKPVSEVLTGMKDVAMDLKFPTMMRWGSNDFEYVRPIKWLVALLDDEVVPFEILDIKTGRTTQGHRFLGEAVDVPSADKYLETLETQKVIADAGVRKAEIRKQIDDLATENNWNIVVDEDLLEEVNNLVEYPTVFAGKFKEEYLQVPNEVLITSMKDHQRFFYVTDKDGNLLPNFVSVRNGNKDYLENVVAGNEKVLTARLEDAKFFYEEDQQHTIADYVERLKKVMFHDKIGTIYEKMERVNLLAKFLGNKLGLSETELKDLDRASMIYKFDLVTGMVGEFSELQGIMGEIYARLQGEDDNVSTAIREEYMPTSSEGELPQSNVGAVLSIADKLDSIQSFFAANMIPSGSNDPYALRRQALGIIRIALDKGWDISLPLLHEAINYAYAEREDLYKNTQPITNVSETDSFVIDRLAQVLSGNKFRRDILDAVVARADMPFIQALQAAQVLSKHAEDDNFKEVIEALTRVTRLAKKAPEFGSDAVIDSTLFENDTEKVLADEFAKVEAGYGDAEMNEKFTILSSLKDSITAYFDATMIMADDEKVKNNRLLQLVKIAELTEDFGSLDKLIVK.

The protein belongs to the class-II aminoacyl-tRNA synthetase family. Tetramer of two alpha and two beta subunits.

Its subcellular location is the cytoplasm. It catalyses the reaction tRNA(Gly) + glycine + ATP = glycyl-tRNA(Gly) + AMP + diphosphate. This Ligilactobacillus salivarius (strain UCC118) (Lactobacillus salivarius) protein is Glycine--tRNA ligase beta subunit.